A 286-amino-acid chain; its full sequence is Small ribosomal subunit protein uS15m (286 aa).

The transit peptide at 1–33 (MSIVGRNAILNLRISLCPLFMGKRSFVSSPVSN) directs the protein to the mitochondrion.

Belongs to the universal ribosomal protein uS15 family. As to quaternary structure, component of the mitochondrial small ribosomal subunit (mt-SSU). Mature yeast 74S mitochondrial ribosomes consist of a small (37S) and a large (54S) subunit. The 37S small subunit contains a 15S ribosomal RNA (15S mt-rRNA) and 34 different proteins. The 54S large subunit contains a 21S rRNA (21S mt-rRNA) and 46 different proteins. The precursor is processed in two steps involving mitochondrial intermediate peptidase (MIP) and mitochondrial processing peptidase (MPP).

It localises to the mitochondrion. Component of the mitochondrial ribosome (mitoribosome), a dedicated translation machinery responsible for the synthesis of mitochondrial genome-encoded proteins, including at least some of the essential transmembrane subunits of the mitochondrial respiratory chain. The mitoribosomes are attached to the mitochondrial inner membrane and translation products are cotranslationally integrated into the membrane. The protein is Small ribosomal subunit protein uS15m (MRPS28) of Saccharomyces cerevisiae (strain ATCC 204508 / S288c) (Baker's yeast).